Consider the following 158-residue polypeptide: Transcription elongation factor GreA (158 aa).

Belongs to the GreA/GreB family.

In terms of biological role, necessary for efficient RNA polymerase transcription elongation past template-encoded arresting sites. The arresting sites in DNA have the property of trapping a certain fraction of elongating RNA polymerases that pass through, resulting in locked ternary complexes. Cleavage of the nascent transcript by cleavage factors such as GreA or GreB allows the resumption of elongation from the new 3'terminus. GreA releases sequences of 2 to 3 nucleotides. In Hamiltonella defensa subsp. Acyrthosiphon pisum (strain 5AT), this protein is Transcription elongation factor GreA.